A 233-amino-acid chain; its full sequence is DNA repair protein RecO (233 aa).

Belongs to the RecO family.

Functionally, involved in DNA repair and RecF pathway recombination. This is DNA repair protein RecO from Francisella philomiragia subsp. philomiragia (strain ATCC 25017 / CCUG 19701 / FSC 153 / O#319-036).